The following is a 1005-amino-acid chain: Band 4.1-like protein 2 (1005 aa).

Residues 1-80 (MTTEVGSVSE…SRGISRFIPP (80 aa)) form a disordered region. Thr-2 is modified (N-acetylthreonine). A Phosphoserine modification is found at Ser-7. The segment covering 22–31 (ATKEKPKEVA) has biased composition (basic and acidic residues). Residues Ser-39, Ser-58, and Ser-87 each carry the phosphoserine modification. Residue Thr-89 is modified to Phosphothreonine. Positions 93–196 (AKDGGDKKEP…GGAAKRETKE (104 aa)) are disordered. Basic and acidic residues-rich tracts occupy residues 111-157 (VLDK…EKPS) and 169-196 (VSKE…ETKE). Residues Lys-140 and Lys-144 each participate in a glycyl lysine isopeptide (Lys-Gly) (interchain with G-Cter in SUMO2) cross-link. A phosphoserine mark is found at Ser-170, Ser-208, Ser-386, Ser-402, Ser-499, Ser-550, Ser-562, Ser-575, Ser-598, and Ser-614. Residues 218–499 (VQCKVTLLDG…EHHTFYRLVS (282 aa)) form the FERM domain. The interval 502 to 610 (QPPKAKFLTL…KAPHLQLIEG (109 aa)) is hydrophilic. Residues 611–676 (KKNSLRVEGD…WEKRRITPLS (66 aa)) are spectrin--actin-binding. Phosphotyrosine is present on Tyr-623. Ser-627 and Ser-647 each carry phosphoserine. Residues 652–800 (KRNFMESTPE…EEAVPEASPV (149 aa)) are disordered. A compositionally biased stretch (polar residues) spans 675-686 (LSLQTQGSSHET). Residues 690–711 (VEEKKRAEVGKDERVITEEMNG) are compositionally biased toward basic and acidic residues. Phosphoserine occurs at positions 715 and 718. The segment covering 734 to 746 (STSLSSESSSSSS) has biased composition (low complexity). Basic and acidic residues-rich tracts occupy residues 754–770 (GEYR…IREE) and 780–793 (EPRP…REEA). At Thr-763 the chain carries Phosphothreonine. Ser-828 carries the post-translational modification Phosphoserine. The segment at 855–1005 (HVDIDVLPQI…ETELAEEGED (151 aa)) is C-terminal (CTD).

In terms of assembly, interacts with FCGR1A. Interacts with TRPC4. Interacts (via CTD domain) with FKBP2. Interacts with NUMA1; this interaction is negatively regulated by CDK1 during metaphase and promotes anaphase-specific localization of NUMA1 in symmetrically dividing cells. In terms of tissue distribution, widely expressed.

It is found in the cytoplasm. The protein resides in the cytoskeleton. It localises to the cell cortex. The protein localises to the cell membrane. In terms of biological role, required for dynein-dynactin complex and NUMA1 recruitment at the mitotic cell cortex during anaphase. This chain is Band 4.1-like protein 2, found in Homo sapiens (Human).